A 64-amino-acid polypeptide reads, in one-letter code: DNA gyrase inhibitor YacG (64 aa).

Residues Cys-9, Cys-12, Cys-28, and Cys-32 each coordinate Zn(2+). Positions 45–64 are disordered; sequence NAIAGAPDMSDSDGWSEDQY. Positions 54–64 are enriched in acidic residues; sequence SDSDGWSEDQY.

It belongs to the DNA gyrase inhibitor YacG family. Interacts with GyrB. Zn(2+) is required as a cofactor.

Its function is as follows. Inhibits all the catalytic activities of DNA gyrase by preventing its interaction with DNA. Acts by binding directly to the C-terminal domain of GyrB, which probably disrupts DNA binding by the gyrase. The sequence is that of DNA gyrase inhibitor YacG from Vibrio parahaemolyticus serotype O3:K6 (strain RIMD 2210633).